A 363-amino-acid chain; its full sequence is 3-isopropylmalate dehydrogenase A (363 aa).

An NAD(+)-binding site is contributed by 78–89 (GPKWGTGAVRPE). Substrate-binding residues include Arg-96, Arg-106, Arg-135, and Asp-222. Mg(2+) contacts are provided by Asp-222, Asp-247, and Asp-251. 287 to 299 (GSAPDIAGKGIVN) lines the NAD(+) pocket.

It belongs to the isocitrate and isopropylmalate dehydrogenases family. As to quaternary structure, homodimer. It depends on Mg(2+) as a cofactor. Requires Mn(2+) as cofactor.

The protein localises to the cytoplasm. The enzyme catalyses (2R,3S)-3-isopropylmalate + NAD(+) = 4-methyl-2-oxopentanoate + CO2 + NADH. It functions in the pathway amino-acid biosynthesis; L-leucine biosynthesis; L-leucine from 3-methyl-2-oxobutanoate: step 3/4. Functionally, catalyzes the oxidation of 3-carboxy-2-hydroxy-4-methylpentanoate (3-isopropylmalate) to 3-carboxy-4-methyl-2-oxopentanoate. The product decarboxylates to 4-methyl-2 oxopentanoate. This chain is 3-isopropylmalate dehydrogenase A (leu2A), found in Aspergillus niger.